We begin with the raw amino-acid sequence, 332 residues long: Ribosomal RNA small subunit methyltransferase H (332 aa).

Residues 42-44 (GGH), Asp-62, Phe-86, Asp-105, and Gln-112 contribute to the S-adenosyl-L-methionine site.

Belongs to the methyltransferase superfamily. RsmH family.

Its subcellular location is the cytoplasm. It catalyses the reaction cytidine(1402) in 16S rRNA + S-adenosyl-L-methionine = N(4)-methylcytidine(1402) in 16S rRNA + S-adenosyl-L-homocysteine + H(+). In terms of biological role, specifically methylates the N4 position of cytidine in position 1402 (C1402) of 16S rRNA. This Cupriavidus pinatubonensis (strain JMP 134 / LMG 1197) (Cupriavidus necator (strain JMP 134)) protein is Ribosomal RNA small subunit methyltransferase H.